Reading from the N-terminus, the 241-residue chain is MELERFRVGLTPTVFYIPGFITDEEQTQLLNHIYGASGSKWKTLKNRRLQNWGGMVHEKGLVPQELPPWLTKITAEIHESSGLFPSAINHVLINEYHPDQGIMPHQDGPAYFPVVAILSLGSPVVMDFTPHLRLRSGDGYISKDQSPCAESCAPERDSFSVLLMPQSLLIFKDDAYSDFLHGISDSPTQCYNQVVNEAEALAYSNEEDSRKDGDKIFHRDQTRVSLTCRLVPKVRKNLFRF.

A Fe2OG dioxygenase domain is found at 87–232; sequence AINHVLINEY…RVSLTCRLVP (146 aa). Fe cation-binding residues include His-105, Asp-107, and His-181. 2 residues coordinate 2-oxoglutarate: Arg-223 and Arg-229.

Belongs to the alkB family. Fe(2+) serves as cofactor.

It is found in the nucleus. Functionally, probable RNA demethylase that binds to both N6-methyladenosine-containing- (m(6)A) and C5-methylcytidine-containing- (m(5)C) RNAs, thus being a probable m(6)A and m(5)C eraser. Involved in responses to abscisic acid (ABA) via the modulation of the expression of ABA signaling-related genes (e.g. ABI3 and ABI4). Acts as a negative regulator during seed germination under abiotic stresses (e.g. salt, cold and ABA). Positive modulator of seedling growth and survival in response to drought and heat, but counteracts tolerance to salt. This is Alkylated DNA repair protein ALKBH6 homolog from Arabidopsis thaliana (Mouse-ear cress).